We begin with the raw amino-acid sequence, 285 residues long: Ribosomal RNA small subunit methyltransferase A (285 aa).

The S-adenosyl-L-methionine site is built by Asn29, Leu31, Gly56, Glu77, Asp102, and Asn123.

Belongs to the class I-like SAM-binding methyltransferase superfamily. rRNA adenine N(6)-methyltransferase family. RsmA subfamily.

Its subcellular location is the cytoplasm. It catalyses the reaction adenosine(1518)/adenosine(1519) in 16S rRNA + 4 S-adenosyl-L-methionine = N(6)-dimethyladenosine(1518)/N(6)-dimethyladenosine(1519) in 16S rRNA + 4 S-adenosyl-L-homocysteine + 4 H(+). Functionally, specifically dimethylates two adjacent adenosines (A1518 and A1519) in the loop of a conserved hairpin near the 3'-end of 16S rRNA in the 30S particle. May play a critical role in biogenesis of 30S subunits. The protein is Ribosomal RNA small subunit methyltransferase A of Clostridium perfringens (strain ATCC 13124 / DSM 756 / JCM 1290 / NCIMB 6125 / NCTC 8237 / Type A).